The chain runs to 110 residues: UPF0060 membrane protein AHA_2410 (110 aa).

4 helical membrane-spanning segments follow: residues 8 to 28 (GLFL…YLWL), 33 to 53 (SVWL…LLSL), 63 to 83 (AAYG…VDGI), and 87 to 107 (LWDL…MFAP).

Belongs to the UPF0060 family.

It localises to the cell inner membrane. The polypeptide is UPF0060 membrane protein AHA_2410 (Aeromonas hydrophila subsp. hydrophila (strain ATCC 7966 / DSM 30187 / BCRC 13018 / CCUG 14551 / JCM 1027 / KCTC 2358 / NCIMB 9240 / NCTC 8049)).